An 847-amino-acid chain; its full sequence is MNINEWEKFSLFQWQECPSIKILHDSVGNKISCIGKSTKRIAIGTLDGRIVILNSRLQLIRDFYACEQGIVQQIYITADQSALCCVVLDKQNFVYLQFWSLNPSKKTNSNSPLCLYEHRLYGIPNPPFPATSLYVSIDIKTVVCGFANGLVIRVEGDFVRDLGSRQDIILREKDSITNLILYSPKKLFVSTTTQVMVYKIKNNTKKVISNHGIPLFCSIQYQGKYIMCAGGSFLSVYTTPDMQLQNTYCVDGTFELLFSSFGLVFVVYTRKNGENGLENNSSIREIKALDVEKRYVLYESLLEQSYDNIFFNSFDCIFFSSTKVPCQLIRLPSDFVLCKMKGKKEHKDAFKIANYLGSPEDTIRECALAAAGECRQQLNFQDATYYYIEAIPFSDSAEIIKFYLEKKLIKELTSYLEALSAKGFAFSHEISTLIYLYIKLRKLDKLTEYVSGCPTEISLPILRKYKCLDQMELLGTIRKLPNVCMEVYQEKGDVEKAFNHLQVCNLPELLRTSNSFGIWLFNSDPMRFMKEAIRNIEILNSQGKDKELSNILKIVYLGIFSQNVQIQLIFLDELLKSKKSENVLKFIYTRKLYALMQKELQHSNPQNELDALQIIHDSQGLLDYESSILCLQAVSWKQVTDLLYSHLSLKEGQDDSLIQQIISDPETVKTLSETYSSEDALHVLKFFVRERSITNKYEDILYKILEACFMQFRIPIQHVLNILVKDGTLNFCFLKPLLLKWMNDYETRIHQNDDEIQVIKNDIEKKRQLLGTIQDSEKVCDNCEGLLDVPFVSYSCLHLVHRDCATETVCPKCKAGYLDKKNSHDQKKTSTFSELFHDFESIDSVML.

The stretch at 387–526 is one CHCR repeat; that stretch reads YIEAIPFSDS…GIWLFNSDPM (140 aa). The RING-type; atypical zinc-finger motif lies at 780–814; the sequence is CDNCEGLLDVPFVSYSCLHLVHRDCATETVCPKCK.

It is found in the cytoplasm. The protein resides in the nucleus. This chain is Pep5-like zinc finger protein C16A10.03c, found in Schizosaccharomyces pombe (strain 972 / ATCC 24843) (Fission yeast).